A 22-amino-acid chain; its full sequence is Conotoxin MIIIJ (22 aa).

Pyrrolidone carboxylic acid is present on Q1. 3 cysteine pairs are disulfide-bonded: C3–C21, C4–C19, and C9–C22.

The protein belongs to the conotoxin M superfamily. In terms of tissue distribution, expressed by the venom duct.

The protein resides in the secreted. Functionally, probable competitive antagonist of fish muscle acetylcholine receptor. Inhibits postsynaptic nicotinic acetylcholine receptors (nAChRs) from fish (zebrafish and goldfish) and frogs (IC(50)=0.1 uM). Protects these receptors from block by alpha-bungarotoxin and alpha-conotoxin EI. Does not block nAChRs at the neuromuscular junction of Rana pipiens. Shows a weak inhibition on mammalian adult and fetal muscle nAChRs (alpha-1-beta-1-delta-epsilon/CHRNA1-CHRNB1-CHRND-CHRNE and alpha-1 beta-1 gamma delta/CHRNA1-CHRNB1-CHRNG-CHRND) (IC(50)=3-45 uM). In vivo, induces paralysis in goldfish (Carassius auratus) but not mice. The polypeptide is Conotoxin MIIIJ (Conus magus (Magical cone)).